Reading from the N-terminus, the 394-residue chain is Acetate kinase (394 aa).

Asn-7 serves as a coordination point for Mg(2+). ATP is bound at residue Lys-14. Arg-90 provides a ligand contact to substrate. Asp-147 acts as the Proton donor/acceptor in catalysis. ATP-binding positions include 204–208 (HLGNG), 278–280 (DLR), and 326–330 (GIGEN). Glu-380 lines the Mg(2+) pocket.

The protein belongs to the acetokinase family. In terms of assembly, homodimer. Mg(2+) is required as a cofactor. Mn(2+) serves as cofactor.

The protein localises to the cytoplasm. The catalysed reaction is acetate + ATP = acetyl phosphate + ADP. Its pathway is metabolic intermediate biosynthesis; acetyl-CoA biosynthesis; acetyl-CoA from acetate: step 1/2. In terms of biological role, catalyzes the formation of acetyl phosphate from acetate and ATP. Can also catalyze the reverse reaction. The sequence is that of Acetate kinase from Flavobacterium johnsoniae (strain ATCC 17061 / DSM 2064 / JCM 8514 / BCRC 14874 / CCUG 350202 / NBRC 14942 / NCIMB 11054 / UW101) (Cytophaga johnsonae).